Consider the following 55-residue polypeptide: Ferredoxin (55 aa).

4Fe-4S ferredoxin-type domains are found at residues 2–26 (YKIT…ISEG) and 27–55 (SIYE…VPED). [4Fe-4S] cluster is bound by residues Cys8, Cys11, Cys14, Cys18, Cys36, Cys39, Cys42, and Cys46.

[4Fe-4S] cluster serves as cofactor.

Its function is as follows. Ferredoxins are iron-sulfur proteins that transfer electrons in a wide variety of metabolic reactions. The sequence is that of Ferredoxin from Butyribacterium methylotrophicum.